A 443-amino-acid polypeptide reads, in one-letter code: Ribosomal protein uS12 methylthiotransferase RimO (443 aa).

The 111-residue stretch at 6–116 folds into the MTTase N-terminal domain; it reads PRVGMISLGC…VVNAVHDVVP (111 aa). [4Fe-4S] cluster contacts are provided by cysteine 15, cysteine 51, cysteine 80, cysteine 149, cysteine 153, and cysteine 156. One can recognise a Radical SAM core domain in the interval 135 to 373; that stretch reads LTPRHYAYLK…MAHQQAISAA (239 aa). One can recognise a TRAM domain in the interval 376-443; it reads QMKIGKEIEV…DEYDLWAEML (68 aa).

The protein belongs to the methylthiotransferase family. RimO subfamily. [4Fe-4S] cluster is required as a cofactor.

The protein resides in the cytoplasm. The catalysed reaction is L-aspartate(89)-[ribosomal protein uS12]-hydrogen + (sulfur carrier)-SH + AH2 + 2 S-adenosyl-L-methionine = 3-methylsulfanyl-L-aspartate(89)-[ribosomal protein uS12]-hydrogen + (sulfur carrier)-H + 5'-deoxyadenosine + L-methionine + A + S-adenosyl-L-homocysteine + 2 H(+). In terms of biological role, catalyzes the methylthiolation of an aspartic acid residue of ribosomal protein uS12. This is Ribosomal protein uS12 methylthiotransferase RimO from Pseudomonas syringae pv. tomato (strain ATCC BAA-871 / DC3000).